The sequence spans 288 residues: Ribosomal RNA small subunit methyltransferase A (288 aa).

Residues 1 to 14 (MSKNQGGNKHQGGS) show a composition bias toward polar residues. The interval 1–21 (MSKNQGGNKHQGGSKTHLGHR) is disordered. Residues Asn-29, Leu-31, Gly-56, Glu-77, Asp-102, and Asn-122 each coordinate S-adenosyl-L-methionine.

It belongs to the class I-like SAM-binding methyltransferase superfamily. rRNA adenine N(6)-methyltransferase family. RsmA subfamily.

Its subcellular location is the cytoplasm. It carries out the reaction adenosine(1518)/adenosine(1519) in 16S rRNA + 4 S-adenosyl-L-methionine = N(6)-dimethyladenosine(1518)/N(6)-dimethyladenosine(1519) in 16S rRNA + 4 S-adenosyl-L-homocysteine + 4 H(+). In terms of biological role, specifically dimethylates two adjacent adenosines (A1518 and A1519) in the loop of a conserved hairpin near the 3'-end of 16S rRNA in the 30S particle. May play a critical role in biogenesis of 30S subunits. The polypeptide is Ribosomal RNA small subunit methyltransferase A (Idiomarina loihiensis (strain ATCC BAA-735 / DSM 15497 / L2-TR)).